A 1361-amino-acid polypeptide reads, in one-letter code: DNA-directed RNA polymerase subunit beta (1361 aa).

It belongs to the RNA polymerase beta chain family. The RNAP catalytic core consists of 2 alpha, 1 beta, 1 beta' and 1 omega subunit. When a sigma factor is associated with the core the holoenzyme is formed, which can initiate transcription.

It carries out the reaction RNA(n) + a ribonucleoside 5'-triphosphate = RNA(n+1) + diphosphate. DNA-dependent RNA polymerase catalyzes the transcription of DNA into RNA using the four ribonucleoside triphosphates as substrates. The sequence is that of DNA-directed RNA polymerase subunit beta from Saccharophagus degradans (strain 2-40 / ATCC 43961 / DSM 17024).